The sequence spans 101 residues: MTHNHENDHQHEVITLVDEQGNETLFEILLTIDGREEFGKNYVLLVPAGSEEDESGEIEIQAYSFTENEDGTEGDLQPIPEDSDAEWDMIEEVFNSFLDEN.

Belongs to the UPF0473 family.

In Streptococcus pyogenes serotype M4 (strain MGAS10750), this protein is UPF0473 protein MGAS10750_Spy1887.